We begin with the raw amino-acid sequence, 202 residues long: Small ribosomal subunit protein uS4 (202 aa).

Residues Ser-91 to Asp-168 form the S4 RNA-binding domain.

This sequence belongs to the universal ribosomal protein uS4 family. In terms of assembly, part of the 30S ribosomal subunit. Contacts protein S5. The interaction surface between S4 and S5 is involved in control of translational fidelity.

One of the primary rRNA binding proteins, it binds directly to 16S rRNA where it nucleates assembly of the body of the 30S subunit. In terms of biological role, with S5 and S12 plays an important role in translational accuracy. The chain is Small ribosomal subunit protein uS4 from Ehrlichia canis (strain Jake).